The primary structure comprises 103 residues: Protein RALF-like 18 (103 aa).

The first 32 residues, 1-32 (MMNNMKLLIIAVMIISAALLPALVVGSRPVKC), serve as a signal peptide directing secretion. Positions 33-58 (DNCMDGGEKEEIMKMSSGVDVSHRIL) are cleaved as a propeptide — removed in mature form. Cysteine 92 and cysteine 98 form a disulfide bridge.

The protein belongs to the plant rapid alkalinization factor (RALF) family. Proteolytically cleaved, probably by S1P, a subtilisin-like serine protease (subtilase).

It localises to the secreted. Functionally, cell signaling peptide that may regulate plant stress, growth, and development. Mediates a rapid alkalinization of extracellular space by mediating a transient increase in the cytoplasmic Ca(2+) concentration leading to a calcium-dependent signaling events through a cell surface receptor and a concomitant activation of some intracellular mitogen-activated protein kinases. The chain is Protein RALF-like 18 (RALFL18) from Arabidopsis thaliana (Mouse-ear cress).